Consider the following 97-residue polypeptide: Co-chaperonin GroES (97 aa).

This sequence belongs to the GroES chaperonin family. In terms of assembly, heptamer of 7 subunits arranged in a ring. Interacts with the chaperonin GroEL.

The protein localises to the cytoplasm. Its function is as follows. Together with the chaperonin GroEL, plays an essential role in assisting protein folding. The GroEL-GroES system forms a nano-cage that allows encapsulation of the non-native substrate proteins and provides a physical environment optimized to promote and accelerate protein folding. GroES binds to the apical surface of the GroEL ring, thereby capping the opening of the GroEL channel. In Burkholderia vietnamiensis, this protein is Co-chaperonin GroES.